A 234-amino-acid polypeptide reads, in one-letter code: OVARIAN TUMOR DOMAIN-containing deubiquitinating enzyme 3 (234 aa).

An OTU domain is found at 76 to 234; sequence YAVDRVKGDG…SGRNHYDLLR (159 aa). The cys-loop stretch occupies residues 81–87; it reads VKGDGRC. Aspartate 84 is an active-site residue. The active-site Nucleophile is cysteine 87. The tract at residues 154 to 164 is variable-loop; the sequence is IGRHDFWGGES. The segment at 224 to 229 is his-loop; the sequence is YSGRNH. Histidine 229 is an active-site residue.

This sequence belongs to the peptidase C85 family.

The enzyme catalyses Thiol-dependent hydrolysis of ester, thioester, amide, peptide and isopeptide bonds formed by the C-terminal Gly of ubiquitin (a 76-residue protein attached to proteins as an intracellular targeting signal).. Hydrolase that can remove conjugated ubiquitin from proteins in vitro and may therefore play an important regulatory role at the level of protein turnover by preventing degradation. Cysteine protease with a preference for 'Lys-63' over 'Lys-48' over 'Met-1' -linked ubiquitin (UB) tetramers (e.g. Ub3 and Ub4) as substrates. Also cleaves RUB-GST fusion. In Arabidopsis thaliana (Mouse-ear cress), this protein is OVARIAN TUMOR DOMAIN-containing deubiquitinating enzyme 3.